We begin with the raw amino-acid sequence, 168 residues long: Leukotoxin-activating lysine-acyltransferase LtxC (168 aa).

Active-site residues include His-23 and Asp-92.

It belongs to the RTX toxin acyltransferase family.

The protein resides in the cytoplasm. The catalysed reaction is a fatty acyl-[ACP] + L-lysyl-[protein] = N(6)-(fatty acyl)-L-lysyl-[protein] + holo-[ACP] + H(+). Its function is as follows. Required for full activity and modification of the LtxA leukotoxin. Involved in fatty acid modification of the protoxin at two internal lysine residues, thereby converting it to the active toxin. The polypeptide is Leukotoxin-activating lysine-acyltransferase LtxC (Aggregatibacter actinomycetemcomitans (Actinobacillus actinomycetemcomitans)).